Reading from the N-terminus, the 960-residue chain is Cyclin-dependent kinase-like 5 (960 aa).

One can recognise a Protein kinase domain in the interval F13–F297. ATP contacts are provided by residues V19 to V27 and K42. Catalysis depends on D135, which acts as the Proton acceptor. Disordered stretches follow at residues Q300–L349, K382–K566, S646–Q834, and A848–L960. Composition is skewed to polar residues over residues E319–Q336 and K382–I402. S407 bears the Phosphoserine mark. Residues S407–F417 show a composition bias toward basic and acidic residues. Composition is skewed to polar residues over residues L434–E462, I473–Y482, and E510–N548. A Phosphoserine modification is found at S479. Composition is skewed to basic and acidic residues over residues N549–R559 and Q679–Y704. A Phosphoserine modification is found at S720. The segment covering H728 to N748 has biased composition (polar residues). A Phosphoserine modification is found at S761. Basic and acidic residues predominate over residues E769 to G778. Residues Q791 to S816 are compositionally biased toward polar residues. Basic and acidic residues predominate over residues R817 to S827. Polar residues-rich tracts occupy residues L862–S872, S880–R890, and S914–E928.

This sequence belongs to the protein kinase superfamily. CMGC Ser/Thr protein kinase family. CDC2/CDKX subfamily. As to quaternary structure, interacts with MECP2. Post-translationally, autophosphorylated. As to expression, expressed in brain, lung, kidney, prostate, ovary, placenta, pancreas and testis. In terms of tissue distribution, predominant transcript in brain.

It is found in the nucleus. The protein resides in the cytoplasm. It localises to the cytoskeleton. Its subcellular location is the cilium basal body. The protein localises to the microtubule organizing center. It is found in the centrosome. It carries out the reaction L-seryl-[protein] + ATP = O-phospho-L-seryl-[protein] + ADP + H(+). The enzyme catalyses L-threonyl-[protein] + ATP = O-phospho-L-threonyl-[protein] + ADP + H(+). In terms of biological role, mediates phosphorylation of MECP2. May regulate ciliogenesis. The polypeptide is Cyclin-dependent kinase-like 5 (Homo sapiens (Human)).